The following is a 168-amino-acid chain: S-ribosylhomocysteine lyase (168 aa).

Fe cation-binding residues include H54, H58, and C128.

It belongs to the LuxS family. Homodimer. Requires Fe cation as cofactor.

The enzyme catalyses S-(5-deoxy-D-ribos-5-yl)-L-homocysteine = (S)-4,5-dihydroxypentane-2,3-dione + L-homocysteine. Involved in the synthesis of autoinducer 2 (AI-2) which is secreted by bacteria and is used to communicate both the cell density and the metabolic potential of the environment. The regulation of gene expression in response to changes in cell density is called quorum sensing. Catalyzes the transformation of S-ribosylhomocysteine (RHC) to homocysteine (HC) and 4,5-dihydroxy-2,3-pentadione (DPD). This chain is S-ribosylhomocysteine lyase, found in Neisseria meningitidis serogroup C (strain 053442).